The following is a 90-amino-acid chain: U7-theraphotoxin-Hhn1l (90 aa).

Positions 1-19 (MKTAIFTVVLALAVFAVLS) are cleaved as a signal peptide. A propeptide spanning residues 20–50 (FGWEANEKALSEEFTELIHEKEAASETEARE) is cleaved from the precursor. Disulfide bonds link Cys51–Cys65, Cys58–Cys70, and Cys64–Cys81.

Belongs to the neurotoxin 10 (Hwtx-1) family. 13 (Hntx-13) subfamily. In terms of tissue distribution, expressed by the venom gland.

It localises to the secreted. Its function is as follows. Ion channel inhibitor. The polypeptide is U7-theraphotoxin-Hhn1l (Cyriopagopus hainanus (Chinese bird spider)).